Reading from the N-terminus, the 40-residue chain is Acyl-CoA-binding protein 2 (40 aa).

Residues 1–15 are compositionally biased toward basic and acidic residues; sequence ALKEEFEEHAEKAKT. Residues 1 to 25 are disordered; that stretch reads ALKEEFEEHAEKAKTLPENTSSENK. The ACB domain occupies 2-40; that stretch reads LKEEFEEHAEKAKTLPENTSSENKLTLYGLYKQATVGNV.

Belongs to the ACBP family.

The protein localises to the cytoplasm. Functionally, binds medium- and long-chain acyl-CoA esters with very high affinity and may function as an intracellular carrier of acyl-CoA esters. The sequence is that of Acyl-CoA-binding protein 2 from Digitalis lanata (Grecian foxglove).